The following is a 214-amino-acid chain: Large ribosomal subunit protein uL3 (214 aa).

The disordered stretch occupies residues 129–155 (FGRGPMSHGSKNHRRPGSVGAGTTPGR).

This sequence belongs to the universal ribosomal protein uL3 family. In terms of assembly, part of the 50S ribosomal subunit. Forms a cluster with proteins L14 and L19.

Functionally, one of the primary rRNA binding proteins, it binds directly near the 3'-end of the 23S rRNA, where it nucleates assembly of the 50S subunit. The chain is Large ribosomal subunit protein uL3 from Synechococcus sp. (strain JA-3-3Ab) (Cyanobacteria bacterium Yellowstone A-Prime).